The primary structure comprises 452 residues: Probable 1,4-beta-D-glucan cellobiohydrolase A (452 aa).

The N-terminal stretch at 1-17 (MHQRALLFSALLTAVRA) is a signal peptide. Asn62 carries N-linked (GlcNAc...) asparagine glycosylation. Catalysis depends on Glu227, which acts as the Nucleophile. The Proton donor role is filled by Glu232. 4 N-linked (GlcNAc...) asparagine glycosylation sites follow: Asn285, Asn335, Asn402, and Asn445.

This sequence belongs to the glycosyl hydrolase 7 (cellulase C) family.

It localises to the secreted. It catalyses the reaction Hydrolysis of (1-&gt;4)-beta-D-glucosidic linkages in cellulose and cellotetraose, releasing cellobiose from the non-reducing ends of the chains.. In terms of biological role, the biological conversion of cellulose to glucose generally requires three types of hydrolytic enzymes: (1) Endoglucanases which cut internal beta-1,4-glucosidic bonds; (2) Exocellobiohydrolases that cut the disaccharide cellobiose from the non-reducing end of the cellulose polymer chain; (3) Beta-1,4-glucosidases which hydrolyze the cellobiose and other short cello-oligosaccharides to glucose. The chain is Probable 1,4-beta-D-glucan cellobiohydrolase A (cbhA) from Aspergillus niger (strain ATCC MYA-4892 / CBS 513.88 / FGSC A1513).